The chain runs to 559 residues: CTP synthase (559 aa).

The tract at residues 1 to 270 (MTKFVFVTGG…DGLICDKLRI (270 aa)) is amidoligase domain. Position 13 (serine 13) interacts with CTP. Serine 13 is a UTP binding site. ATP is bound by residues 14-19 (SLGKGI) and aspartate 71. Mg(2+) contacts are provided by aspartate 71 and glutamate 144. Residues 151 to 153 (DIE), 191 to 196 (KTKPTQ), and lysine 227 each bind CTP. Residues 191-196 (KTKPTQ) and lysine 227 each bind UTP. The Glutamine amidotransferase type-1 domain occupies 295–547 (SIAMVGKYVD…IKAALDHKAR (253 aa)). Residue glycine 356 coordinates L-glutamine. Cysteine 383 serves as the catalytic Nucleophile; for glutamine hydrolysis. L-glutamine-binding positions include 384-387 (LGMQ), glutamate 407, and arginine 473. Active-site residues include histidine 520 and glutamate 522.

This sequence belongs to the CTP synthase family. Homotetramer.

The enzyme catalyses UTP + L-glutamine + ATP + H2O = CTP + L-glutamate + ADP + phosphate + 2 H(+). It carries out the reaction L-glutamine + H2O = L-glutamate + NH4(+). The catalysed reaction is UTP + NH4(+) + ATP = CTP + ADP + phosphate + 2 H(+). Its pathway is pyrimidine metabolism; CTP biosynthesis via de novo pathway; CTP from UDP: step 2/2. With respect to regulation, allosterically activated by GTP, when glutamine is the substrate; GTP has no effect on the reaction when ammonia is the substrate. The allosteric effector GTP functions by stabilizing the protein conformation that binds the tetrahedral intermediate(s) formed during glutamine hydrolysis. Inhibited by the product CTP, via allosteric rather than competitive inhibition. Its function is as follows. Catalyzes the ATP-dependent amination of UTP to CTP with either L-glutamine or ammonia as the source of nitrogen. Regulates intracellular CTP levels through interactions with the four ribonucleotide triphosphates. This chain is CTP synthase, found in Variovorax paradoxus (strain S110).